A 418-amino-acid polypeptide reads, in one-letter code: 1-deoxy-D-xylulose 5-phosphate reductoisomerase (418 aa).

Positions 32, 33, 34, 35, and 150 each coordinate NADPH. Lysine 151 is a binding site for 1-deoxy-D-xylulose 5-phosphate. Glutamate 152 lines the NADPH pocket. Aspartate 174 contacts Mn(2+). 1-deoxy-D-xylulose 5-phosphate-binding residues include serine 175, glutamate 176, serine 200, and histidine 223. A Mn(2+)-binding site is contributed by glutamate 176. NADPH is bound at residue glycine 229. Residues serine 236, asparagine 241, lysine 242, and glutamate 245 each coordinate 1-deoxy-D-xylulose 5-phosphate. Glutamate 245 is a Mn(2+) binding site.

The protein belongs to the DXR family. The cofactor is Mg(2+). Requires Mn(2+) as cofactor.

The enzyme catalyses 2-C-methyl-D-erythritol 4-phosphate + NADP(+) = 1-deoxy-D-xylulose 5-phosphate + NADPH + H(+). It participates in isoprenoid biosynthesis; isopentenyl diphosphate biosynthesis via DXP pathway; isopentenyl diphosphate from 1-deoxy-D-xylulose 5-phosphate: step 1/6. Functionally, catalyzes the NADPH-dependent rearrangement and reduction of 1-deoxy-D-xylulose-5-phosphate (DXP) to 2-C-methyl-D-erythritol 4-phosphate (MEP). The sequence is that of 1-deoxy-D-xylulose 5-phosphate reductoisomerase from Streptomyces coelicolor (strain ATCC BAA-471 / A3(2) / M145).